Consider the following 306-residue polypeptide: Ribonuclease Z (306 aa).

Residues histidine 63, histidine 65, aspartate 67, histidine 68, histidine 142, aspartate 213, and histidine 271 each contribute to the Zn(2+) site. Catalysis depends on aspartate 67, which acts as the Proton acceptor.

It belongs to the RNase Z family. As to quaternary structure, homodimer. The cofactor is Zn(2+).

It catalyses the reaction Endonucleolytic cleavage of RNA, removing extra 3' nucleotides from tRNA precursor, generating 3' termini of tRNAs. A 3'-hydroxy group is left at the tRNA terminus and a 5'-phosphoryl group is left at the trailer molecule.. In terms of biological role, zinc phosphodiesterase, which displays some tRNA 3'-processing endonuclease activity. Probably involved in tRNA maturation, by removing a 3'-trailer from precursor tRNA. This Oceanobacillus iheyensis (strain DSM 14371 / CIP 107618 / JCM 11309 / KCTC 3954 / HTE831) protein is Ribonuclease Z.